Consider the following 643-residue polypeptide: Threonine--tRNA ligase (643 aa).

The 62-residue stretch at 3 to 64 (DMINITFPDG…QEDGAVEIIT (62 aa)) folds into the TGS domain. A catalytic region spans residues 245 to 542 (DHRKLGKELK…LIEEHKGALP (298 aa)). Zn(2+)-binding residues include Cys338, His389, and His519.

The protein belongs to the class-II aminoacyl-tRNA synthetase family. Homodimer. The cofactor is Zn(2+).

The protein resides in the cytoplasm. The enzyme catalyses tRNA(Thr) + L-threonine + ATP = L-threonyl-tRNA(Thr) + AMP + diphosphate + H(+). Functionally, catalyzes the attachment of threonine to tRNA(Thr) in a two-step reaction: L-threonine is first activated by ATP to form Thr-AMP and then transferred to the acceptor end of tRNA(Thr). Also edits incorrectly charged L-seryl-tRNA(Thr). The sequence is that of Threonine--tRNA ligase from Bacillus velezensis (strain DSM 23117 / BGSC 10A6 / LMG 26770 / FZB42) (Bacillus amyloliquefaciens subsp. plantarum).